The following is a 452-amino-acid chain: UDP-N-acetylmuramoylalanine--D-glutamate ligase (452 aa).

Residue 113 to 119 (GTNGKTT) participates in ATP binding.

The protein belongs to the MurCDEF family.

The protein localises to the cytoplasm. It carries out the reaction UDP-N-acetyl-alpha-D-muramoyl-L-alanine + D-glutamate + ATP = UDP-N-acetyl-alpha-D-muramoyl-L-alanyl-D-glutamate + ADP + phosphate + H(+). It participates in cell wall biogenesis; peptidoglycan biosynthesis. Cell wall formation. Catalyzes the addition of glutamate to the nucleotide precursor UDP-N-acetylmuramoyl-L-alanine (UMA). The chain is UDP-N-acetylmuramoylalanine--D-glutamate ligase (murD) from Synechocystis sp. (strain ATCC 27184 / PCC 6803 / Kazusa).